We begin with the raw amino-acid sequence, 351 residues long: Phospho-N-acetylmuramoyl-pentapeptide-transferase (351 aa).

10 consecutive transmembrane segments (helical) span residues T17–S37, M61–I83, I88–F105, I130–I150, S158–A178, G190–T210, L230–Y250, I254–I274, I279–V299, and Q328–I348.

This sequence belongs to the glycosyltransferase 4 family. MraY subfamily. It depends on Mg(2+) as a cofactor.

The protein resides in the cell inner membrane. The enzyme catalyses UDP-N-acetyl-alpha-D-muramoyl-L-alanyl-gamma-D-glutamyl-meso-2,6-diaminopimeloyl-D-alanyl-D-alanine + di-trans,octa-cis-undecaprenyl phosphate = di-trans,octa-cis-undecaprenyl diphospho-N-acetyl-alpha-D-muramoyl-L-alanyl-D-glutamyl-meso-2,6-diaminopimeloyl-D-alanyl-D-alanine + UMP. It participates in cell wall biogenesis; peptidoglycan biosynthesis. Catalyzes the initial step of the lipid cycle reactions in the biosynthesis of the cell wall peptidoglycan: transfers peptidoglycan precursor phospho-MurNAc-pentapeptide from UDP-MurNAc-pentapeptide onto the lipid carrier undecaprenyl phosphate, yielding undecaprenyl-pyrophosphoryl-MurNAc-pentapeptide, known as lipid I. In Borrelia recurrentis (strain A1), this protein is Phospho-N-acetylmuramoyl-pentapeptide-transferase.